Here is a 423-residue protein sequence, read N- to C-terminus: Serine--tRNA ligase (423 aa).

Basic and acidic residues predominate over residues 1–12; sequence MIDLKALRENPD. Residues 1–26 are disordered; it reads MIDLKALRENPDVGRASQRSRGEDPE. 230 to 232 is a binding site for L-serine; that stretch reads TSE. ATP-binding positions include 261-263 and Val277; that span reads RRE. Glu284 provides a ligand contact to L-serine. 348–351 serves as a coordination point for ATP; sequence ELTS. Thr383 serves as a coordination point for L-serine.

Belongs to the class-II aminoacyl-tRNA synthetase family. Type-1 seryl-tRNA synthetase subfamily. As to quaternary structure, homodimer. The tRNA molecule binds across the dimer.

Its subcellular location is the cytoplasm. The catalysed reaction is tRNA(Ser) + L-serine + ATP = L-seryl-tRNA(Ser) + AMP + diphosphate + H(+). It catalyses the reaction tRNA(Sec) + L-serine + ATP = L-seryl-tRNA(Sec) + AMP + diphosphate + H(+). Its pathway is aminoacyl-tRNA biosynthesis; selenocysteinyl-tRNA(Sec) biosynthesis; L-seryl-tRNA(Sec) from L-serine and tRNA(Sec): step 1/1. Its function is as follows. Catalyzes the attachment of serine to tRNA(Ser). Is also able to aminoacylate tRNA(Sec) with serine, to form the misacylated tRNA L-seryl-tRNA(Sec), which will be further converted into selenocysteinyl-tRNA(Sec). The chain is Serine--tRNA ligase from Beutenbergia cavernae (strain ATCC BAA-8 / DSM 12333 / CCUG 43141 / JCM 11478 / NBRC 16432 / NCIMB 13614 / HKI 0122).